We begin with the raw amino-acid sequence, 236 residues long: tRNA (guanine-N(7)-)-methyltransferase (236 aa).

Residues aspartate 35, glutamate 60, asparagine 87, and aspartate 113 each coordinate S-adenosyl-L-methionine. The active site involves aspartate 113. Residues lysine 117 and aspartate 149 each contribute to the substrate site.

Belongs to the class I-like SAM-binding methyltransferase superfamily. TrmB family.

It catalyses the reaction guanosine(46) in tRNA + S-adenosyl-L-methionine = N(7)-methylguanosine(46) in tRNA + S-adenosyl-L-homocysteine. The protein operates within tRNA modification; N(7)-methylguanine-tRNA biosynthesis. Its function is as follows. Catalyzes the formation of N(7)-methylguanine at position 46 (m7G46) in tRNA. This Prochlorococcus marinus (strain MIT 9303) protein is tRNA (guanine-N(7)-)-methyltransferase.